We begin with the raw amino-acid sequence, 333 residues long: Glycerol-3-phosphate dehydrogenase [NAD(P)+] (333 aa).

W12, H31, and K105 together coordinate NADPH. The sn-glycerol 3-phosphate site is built by K105, G134, and S136. A138 is a binding site for NADPH. Positions 189, 242, 252, 253, and 254 each coordinate sn-glycerol 3-phosphate. The Proton acceptor role is filled by K189. R253 provides a ligand contact to NADPH. Residues V278 and E280 each contribute to the NADPH site.

The protein belongs to the NAD-dependent glycerol-3-phosphate dehydrogenase family.

Its subcellular location is the cytoplasm. The catalysed reaction is sn-glycerol 3-phosphate + NAD(+) = dihydroxyacetone phosphate + NADH + H(+). It carries out the reaction sn-glycerol 3-phosphate + NADP(+) = dihydroxyacetone phosphate + NADPH + H(+). The protein operates within membrane lipid metabolism; glycerophospholipid metabolism. Functionally, catalyzes the reduction of the glycolytic intermediate dihydroxyacetone phosphate (DHAP) to sn-glycerol 3-phosphate (G3P), the key precursor for phospholipid synthesis. The sequence is that of Glycerol-3-phosphate dehydrogenase [NAD(P)+] from Brachyspira hyodysenteriae (strain ATCC 49526 / WA1).